We begin with the raw amino-acid sequence, 534 residues long: GMP synthase [glutamine-hydrolyzing] (534 aa).

Residues 4 to 202 form the Glutamine amidotransferase type-1 domain; the sequence is KILILDFGSQ…VLEIAKAQPD (199 aa). The Nucleophile role is filled by cysteine 81. Active-site residues include histidine 176 and glutamate 178. The 200-residue stretch at 203–402 folds into the GMPS ATP-PPase domain; it reads WVMKDHVAEA…LGLPHDMVYR (200 aa). 230–236 is a binding site for ATP; that stretch reads SGGVDSS.

Homodimer.

It catalyses the reaction XMP + L-glutamine + ATP + H2O = GMP + L-glutamate + AMP + diphosphate + 2 H(+). Its pathway is purine metabolism; GMP biosynthesis; GMP from XMP (L-Gln route): step 1/1. Functionally, catalyzes the synthesis of GMP from XMP. The sequence is that of GMP synthase [glutamine-hydrolyzing] from Methylibium petroleiphilum (strain ATCC BAA-1232 / LMG 22953 / PM1).